Reading from the N-terminus, the 404-residue chain is Diaminopropionate ammonia-lyase (404 aa).

Lys-78 is modified (N6-(pyridoxal phosphate)lysine).

This sequence belongs to the diaminopropionate ammonia-lyase family. Homodimer. The cofactor is pyridoxal 5'-phosphate.

The catalysed reaction is (S)-2,3-diaminopropanoate + H2O + H(+) = pyruvate + 2 NH4(+). It carries out the reaction (R)-2,3-diaminopropanoate + H2O + H(+) = pyruvate + 2 NH4(+). Competitively inhibited by L- and D-alanine. Functionally, catalyzes the alpha,beta-elimination reaction of both L- and D-alpha,beta-diaminopropionate (DAP) to form pyruvate and ammonia. In vitro L- and D-isomers of serine are also degraded, though slowly; it is the only serine dehydratase which can eliminate an amino group at the beta-carbon position. In vivo L-, D- and a mixure of DL-DAP allow growth. DL-DAP is toxic in the absence of this enzyme, it may inhibit enzymes involved in the synthesis of pyruvate and aspartate, as well as amino acids derived from them. In Salmonella typhimurium (strain LT2 / SGSC1412 / ATCC 700720), this protein is Diaminopropionate ammonia-lyase (dpaL).